We begin with the raw amino-acid sequence, 430 residues long: Rho GTPase-activating protein 2 (430 aa).

Residues M1–Q36 form a disordered region. A compositionally biased stretch (gly residues) spans K9–K18. One can recognise a CRIB domain in the interval I80–T93. A Rho-GAP domain is found at V125–T310. A disordered region spans residues E307–D372. A compositionally biased stretch (low complexity) spans S316–D326. Residues E347–E356 are compositionally biased toward acidic residues. Residues V357 to E371 are compositionally biased toward basic and acidic residues.

As to quaternary structure, homodimerizes via its Rho-GAP domain and forms a tetrameric complex (2:2) with ARAC1/ROP3, ARAC2/ROP7, ARAC4/ROP2, ARAC5/ROP4, ARAC7/ROP9 or ARAC11/ROP1.

Acts as a GTPase activator for the Rac-type GTPase by converting it to an inactive GDP-bound state. This chain is Rho GTPase-activating protein 2 (ROPGAP2), found in Arabidopsis thaliana (Mouse-ear cress).